A 288-amino-acid chain; its full sequence is ATP synthase gamma chain (288 aa).

Belongs to the ATPase gamma chain family. F-type ATPases have 2 components, CF(1) - the catalytic core - and CF(0) - the membrane proton channel. CF(1) has five subunits: alpha(3), beta(3), gamma(1), delta(1), epsilon(1). CF(0) has three main subunits: a, b and c.

Its subcellular location is the cell inner membrane. Produces ATP from ADP in the presence of a proton gradient across the membrane. The gamma chain is believed to be important in regulating ATPase activity and the flow of protons through the CF(0) complex. This Rickettsia typhi (strain ATCC VR-144 / Wilmington) protein is ATP synthase gamma chain.